A 560-amino-acid polypeptide reads, in one-letter code: uncharacterized protein (560 aa).

Topologically, residues 1–17 are cytoplasmic; that stretch reads MEPKRKSGSLAKHDLPQ. A helical transmembrane segment spans residues 18–38; that stretch reads FYLLIMLYLAQGIPVGLAFGT. At 39 to 54 the chain is on the extracellular side; that stretch reads VPFLLKSLAKETSFTS. A helical transmembrane segment spans residues 55 to 75; sequence LGIFSMATYPYSLKIIWSPIV. At 76–88 the chain is on the cytoplasmic side; the sequence is DSLYNKRIGRRRS. Residues 89-109 form a helical membrane-spanning segment; that stretch reads WIIPVQFVSGFVLWALGWCIS. The Extracellular segment spans residues 110–139; it reads QGIIFDGVDDAFHNRGNGTLHSVSIKNLTW. The helical transmembrane segment at 140–160 threads the bilayer; it reads WFGLLVFLCATQDIAVDGWAL. Residues 161 to 172 are Cytoplasmic-facing; sequence TILSKESLSYAS. The chain crosses the membrane as a helical span at residues 173–193; it reads TAQTIGLNIGYFMSFTIFLSL. Topologically, residues 194-214 are extracellular; that stretch reads NSSDFANKYFRNIPLDHGFIS. A helical membrane pass occupies residues 215–235; that stretch reads LGGYMKFSGMLYIVITIYIIF. Residues 236–329 are Cytoplasmic-facing; it reads CTKEKPYVEY…KLLEQGFKRE (94 aa). The chain crosses the membrane as a helical span at residues 330–350; that stretch reads DLAVTVLIDLPFEIIFGYYVV. Residues 351-374 are Extracellular-facing; it reads KWSSDKDPMIRDNRRLRNSTGTNK. A helical transmembrane segment spans residues 375 to 395; that stretch reads VIKFLVGDAGVLTPWLWGFLG. Residues 396-421 are Cytoplasmic-facing; sequence RLAAAVLGSYVVKQFPKDGEISTGYF. A helical membrane pass occupies residues 422-442; that stretch reads CLVIFQHLLGSFMNTVQFIGI. The Extracellular portion of the chain corresponds to 443-521; the sequence is SAFHTRVADP…LNGTVTILRD (79 aa). Residues 522–542 traverse the membrane as a helical segment; that stretch reads GYYITNLICIVVGLFLYFGYL. The Cytoplasmic segment spans residues 543–560; that stretch reads KRKILHLQSLPISSWRCT.

It is found in the membrane. This is an uncharacterized protein from Saccharomyces cerevisiae (strain ATCC 204508 / S288c) (Baker's yeast).